A 279-amino-acid chain; its full sequence is Energy-coupling factor transporter ATP-binding protein EcfA (279 aa).

An ABC transporter domain is found at 5-240 (IELEKINYKY…GPELIDLGLD (236 aa)). An ATP-binding site is contributed by 40-47 (GHNGSGKS).

It belongs to the ABC transporter superfamily. Energy-coupling factor EcfA family. Forms a stable energy-coupling factor (ECF) transporter complex composed of 2 membrane-embedded substrate-binding proteins (S component), 2 ATP-binding proteins (A component) and 2 transmembrane proteins (T component).

It is found in the cell membrane. Functionally, ATP-binding (A) component of a common energy-coupling factor (ECF) ABC-transporter complex. Unlike classic ABC transporters this ECF transporter provides the energy necessary to transport a number of different substrates. This chain is Energy-coupling factor transporter ATP-binding protein EcfA, found in Enterococcus faecium (Streptococcus faecium).